Here is a 588-residue protein sequence, read N- to C-terminus: MMRTHYCGALNRNNIGQDVTLSGWVHRRRDLGGLIFIDMRDRDGIVQVCFDPKYQDALTAAAGLRNEFCIQIKGEVIARPENQINKNMATGEVEVLAKELRVYNASDVLPLDFNQNNTEEQRLKYRYLDLRRPEMAQRLKTRAKITSFVRRFMDDNGFLDIETPMLTKATPEGARDYLVPSRVHKGKFYALPQSPQLFKQLLMMSGFDRYYQIVKCFRDEDLRADRQPEFTQIDVETSFLTAPEVREIMERMVHGLWLDTIGVDLGKFPVMTWQEAMRRFGSDKPDLRNPLEIVDVADIVKDVEFKVFNEPANNPNGRVAVIRVPNGAEITRKQIDEYTQFVGIYGAKGLAWAKVNDINAGLEGVQSPIAKFLNEEVWKALAERVNAQTGDILFFGADKWQTTTDAMGALRLKLGRDLGLTRLDEWKPLWVIDFPMFERDEEGNLAAMHHPFTSPKDFSPEQLEADPTSAVANAYDMVINGYEVGGGSVRIFDPKMQQTVFRILGIDEEQQREKFGFLLDALKFGTPPHAGLAFGLDRLTMLLTGTENIRDVIAFPKTTAAACLMTEAPSFANPQALEELAIQVTKSE.

E172 is an L-aspartate binding site. The interval 196–199 (QLFK) is aspartate. R218 contacts L-aspartate. Residues 218–220 (RDE) and Q227 contribute to the ATP site. Residue H449 participates in L-aspartate binding. Residue E483 coordinates ATP. R490 is a binding site for L-aspartate. 535–538 (GLDR) provides a ligand contact to ATP.

Belongs to the class-II aminoacyl-tRNA synthetase family. Type 1 subfamily. As to quaternary structure, homodimer.

It localises to the cytoplasm. The enzyme catalyses tRNA(Asp) + L-aspartate + ATP = L-aspartyl-tRNA(Asp) + AMP + diphosphate. Catalyzes the attachment of L-aspartate to tRNA(Asp) in a two-step reaction: L-aspartate is first activated by ATP to form Asp-AMP and then transferred to the acceptor end of tRNA(Asp). The chain is Aspartate--tRNA ligase from Haemophilus influenzae (strain PittEE).